A 253-amino-acid polypeptide reads, in one-letter code: ABC transporter D-alanine-binding periplasmic protein (253 aa).

The first 22 residues, 1-22, serve as a signal peptide directing secretion; sequence MLSKKFGLSMIVLGIMSSSAFA. D-alanine-binding residues include Gly-95, Ser-97, Arg-102, Ala-147, and Glu-191.

This sequence belongs to the bacterial solute-binding protein 3 family. Monomer.

The protein localises to the periplasm. Its function is as follows. Part of the ABC transporter complex dalSTUV, that imports D-alanine into the cytoplasm. Helps protect the organism from oxidative killing by host neutrophils through sequestration of D-alanine, a substrate that is converted to hydrogen peroxide by the host enzyme DAO (D-amino acid oxidase). DalS shuttles D-alanine from the periplasm to the DalTUV complex situated in the inner membrane and through hydrolysis of ATP, D-alanine is transported across the membrane into the cytoplasm. Not required for the metabolism of D-alanine found in the stem peptide of peptidoglycan. The protein is ABC transporter D-alanine-binding periplasmic protein of Salmonella typhimurium (strain LT2 / SGSC1412 / ATCC 700720).